Consider the following 296-residue polypeptide: Acetyl-coenzyme A carboxylase carboxyl transferase subunit beta (296 aa).

The region spanning 25–294 (VWTKCTSCEQ…PFVEPELISE (270 aa)) is the CoA carboxyltransferase N-terminal domain. Residues C29, C32, C48, and C51 each contribute to the Zn(2+) site. The C4-type zinc-finger motif lies at 29–51 (CTSCEQVLYSEELKRNLYVCPKC).

It belongs to the AccD/PCCB family. Acetyl-CoA carboxylase is a heterohexamer composed of biotin carboxyl carrier protein (AccB), biotin carboxylase (AccC) and two subunits each of ACCase subunit alpha (AccA) and ACCase subunit beta (AccD). Zn(2+) is required as a cofactor.

The protein resides in the cytoplasm. The catalysed reaction is N(6)-carboxybiotinyl-L-lysyl-[protein] + acetyl-CoA = N(6)-biotinyl-L-lysyl-[protein] + malonyl-CoA. It functions in the pathway lipid metabolism; malonyl-CoA biosynthesis; malonyl-CoA from acetyl-CoA: step 1/1. In terms of biological role, component of the acetyl coenzyme A carboxylase (ACC) complex. Biotin carboxylase (BC) catalyzes the carboxylation of biotin on its carrier protein (BCCP) and then the CO(2) group is transferred by the transcarboxylase to acetyl-CoA to form malonyl-CoA. The chain is Acetyl-coenzyme A carboxylase carboxyl transferase subunit beta from Haemophilus influenzae (strain PittEE).